The following is a 668-amino-acid chain: tRNA 5-methylaminomethyl-2-thiouridine biosynthesis bifunctional protein MnmC (668 aa).

Positions 1 to 245 (MKHYSIQPAN…KREMLCGVME (245 aa)) are tRNA (mnm(5)s(2)U34)-methyltransferase. An FAD-dependent cmnm(5)s(2)U34 oxidoreductase region spans residues 270-668 (IGGGIASALL…LLKGKAVKAG (399 aa)).

In the N-terminal section; belongs to the methyltransferase superfamily. tRNA (mnm(5)s(2)U34)-methyltransferase family. This sequence in the C-terminal section; belongs to the DAO family. It depends on FAD as a cofactor.

Its subcellular location is the cytoplasm. The enzyme catalyses 5-aminomethyl-2-thiouridine(34) in tRNA + S-adenosyl-L-methionine = 5-methylaminomethyl-2-thiouridine(34) in tRNA + S-adenosyl-L-homocysteine + H(+). Catalyzes the last two steps in the biosynthesis of 5-methylaminomethyl-2-thiouridine (mnm(5)s(2)U) at the wobble position (U34) in tRNA. Catalyzes the FAD-dependent demodification of cmnm(5)s(2)U34 to nm(5)s(2)U34, followed by the transfer of a methyl group from S-adenosyl-L-methionine to nm(5)s(2)U34, to form mnm(5)s(2)U34. This Escherichia coli (strain UTI89 / UPEC) protein is tRNA 5-methylaminomethyl-2-thiouridine biosynthesis bifunctional protein MnmC.